Reading from the N-terminus, the 187-residue chain is Cytochrome c oxidase assembly protein CtaG (187 aa).

Residues 1-9 lie on the Cytoplasmic side of the membrane; the sequence is MSKKSNKNL. A helical; Signal-anchor for type II membrane protein membrane pass occupies residues 10–30; it reads AFSLLGLIISMVLLSFASVPI. The Periplasmic portion of the chain corresponds to 31–187; sequence YNLFCKVTGY…IASLRGNTKY (157 aa).

Belongs to the COX11/CtaG family.

Its subcellular location is the cell inner membrane. In terms of biological role, exerts its effect at some terminal stage of cytochrome c oxidase synthesis, probably by being involved in the insertion of the copper B into subunit I. This is Cytochrome c oxidase assembly protein CtaG from Rickettsia felis (strain ATCC VR-1525 / URRWXCal2) (Rickettsia azadi).